A 318-amino-acid chain; its full sequence is Probable casein kinase I homolog ECU11_1980 (318 aa).

Residues 8 to 276 (YTICREIGKG…YLNSLLDKIF (269 aa)) form the Protein kinase domain. Residues 14 to 22 (IGKGGFGKV) and K37 contribute to the ATP site. D129 functions as the Proton acceptor in the catalytic mechanism.

The protein belongs to the protein kinase superfamily. CK1 Ser/Thr protein kinase family. Casein kinase I subfamily.

It is found in the nucleus. The catalysed reaction is L-seryl-[protein] + ATP = O-phospho-L-seryl-[protein] + ADP + H(+). It catalyses the reaction L-threonyl-[protein] + ATP = O-phospho-L-threonyl-[protein] + ADP + H(+). In terms of biological role, involved in DNA repair. May regulate the activity of protein(s) involved in double strand break repair caused by gamma rays. The polypeptide is Probable casein kinase I homolog ECU11_1980 (Encephalitozoon cuniculi (strain GB-M1) (Microsporidian parasite)).